Consider the following 383-residue polypeptide: Protein delta homolog 1 (383 aa).

The first 23 residues, 1 to 23 (MTATEALLRVLLLLLAFGHSTYG), serve as a signal peptide directing secretion. EGF-like domains lie at 24 to 55 (AECFPACNPQNGFCEDDNVCRCQPGWQGPLCD), 53 to 86 (LCDQCVTSPGCLHGLCGEPGQCICTDGWDGELCD), 88 to 125 (DVRACSSAPCANNRTCVSLDDGLYECSCAPGYSGKDCQ), 127 to 168 (KDGP…NFCE), 170 to 206 (VANSCTPNPCENDGVCTDIGGDFRCRCPAGFIDKTCS), and 208 to 245 (PVTNCASSPCQNGGTCLQHTQVSYECLCKPEFTGLTCV). Topologically, residues 24 to 303 (AECFPACNPQ…KKTPLLTEGQ (280 aa)) are extracellular. 12 cysteine pairs are disulfide-bonded: C26/C37, C30/C43, C45/C54, C57/C68, C63/C74, C76/C85, C92/C103, C97/C113, C115/C124, C131/C144, C138/C156, and C158/C167. S94 carries O-linked (GalNAc...) serine glycosylation. N-linked (GlcNAc...) asparagine glycosylation is present at N100. T143 carries O-linked (GalNAc...) threonine glycosylation. A glycan (O-linked (GalNAc...) serine; partial) is linked at S163. N-linked (GlcNAc...) asparagine; atypical; partial glycosylation is found at N165 and N172. 6 cysteine pairs are disulfide-bonded: C174/C185, C179/C194, C196/C205, C212/C223, C217/C233, and C235/C244. O-linked (GalNAc...) serine glycosylation occurs at S214. An O-linked (GalNAc...) threonine; partial glycan is attached at T222. S251 is a glycosylation site (O-linked (GalNAc...) serine; partial). O-linked (GalNAc...) threonine glycosylation is present at T256. S260 is a glycosylation site (O-linked (GalNAc...) serine; partial). Residues 304 to 327 (AICFTILGVLTSLVVLGTVGIVFL) form a helical membrane-spanning segment. Residues 328-383 (NKCETWVSNLRYNHMLRKKKNLLLQYNSGEDLAVNIIFPEKIDMTTFSKEAGDEEI) are Cytoplasmic-facing.

Monomer. Interacts with SH3RF2. N- and O-glycosylated. O-glycosylated with core 1 or possibly core 8 glycans. As to expression, found within the stromal cells in close contact to the vascular structure of placental villi, yolk sac, fetal liver, adrenal cortex and pancreas and in the beta cells of the islets of Langerhans in the adult pancreas. Found also in some forms of neuroendocrine lung tumor tissue.

It localises to the membrane. It is found in the cytoplasm. Functionally, may have a role in neuroendocrine differentiation. In Homo sapiens (Human), this protein is Protein delta homolog 1 (DLK1).